The chain runs to 1103 residues: MTACARRAGGLPDPGLCGPAWWAPSLPRLPRALPRLPLLLLLLLLQPPALSAVFTVGVLGPWACDPIFSRARPDLAARLAAARLNRDPGLAGGPRFEVALLPEPCRTPGSLGAVSSALARVSGLVGPVNPAACRPAELLAEEAGIALVPWGCPWTQAEGTTAPAVTPAADALYALLRAFGWARVALVTAPQDLWVEAGRSLSTALRARGLPVASVTSMEPLDLSGAREALRKVRDGPRVTAVIMVMHSVLLGGEEQRYLLEAAEELGLTDGSLVFLPFDTIHYALSPGPEALAALANSSQLRRAHDAVLTLTRHCPSEGSVLDSLRRAQERRELPSDLNLQQVSPLFGTIYDAVFLLARGVAEARAAAGGRWVSGAAVARHIRDAQVPGFCGDLGGDEEPPFVLLDTDAAGDRLFATYMLDPARGSFLSAGTRMHFPRGGSAPGPDPSCWFDPNNICGGGLEPGLVFLGFLLVVGMGLAGAFLAHYVRHRLLHMQMVSGPNKIILTVDDITFLHPHGGTSRKVAQGSRSSLGARSMSDIRSGPSQHLDSPNIGVYEGDRVWLKKFPGDQHIAIRPATKTAFSKLQELRHENVALYLGLFLARGAEGPAALWEGNLAVVSEHCTRGSLQDLLAQREIKLDWMFKSSLLLDLIKGIRYLHHRGVAHGRLKSRNCIVDGRFVLKITDHGHGRLLEAQKVLPEPPRAEDQLWTAPELLRDPALERRGTLAGDVFSLAIIMQEVVCRSAPYAMLELTPEEVVQRVRSPPPLCRPLVSMDQAPVECILLMKQCWAEQPELRPSMDHTFDLFKNINKGRKTNIIDSMLRMLEQYSSNLEDLIRERTEELELEKQKTDRLLTQMLPPSVAEALKTGTPVEPEYFEQVTLYFSDIVGFTTISAMSEPIEVVDLLNDLYTLFDAIIGSHDVYKVETIGDAYMVASGLPQRNGQRHAAEIANMSLDILSAVGTFRMRHMPEVPVRIRIGLHSGPCVAGVVGLTMPRYCLFGDTVNTASRMESTGLPYRIHVNLSTVGILRALDSGYQVELRGRTELKGKGAEDTFWLVGRRGFNKPIPKPPDLQPGSSNHGISLQEIPPERRRKLEKARPGQFS.

The first 51 residues, 1–51 (MTACARRAGGLPDPGLCGPAWWAPSLPRLPRALPRLPLLLLLLLLQPPALS), serve as a signal peptide directing secretion. Residues 52–462 (AVFTVGVLGP…PNNICGGGLE (411 aa)) lie on the Extracellular side of the membrane. The N-linked (GlcNAc...) asparagine glycan is linked to asparagine 297. A helical transmembrane segment spans residues 463–487 (PGLVFLGFLLVVGMGLAGAFLAHYV). Topologically, residues 488–1103 (RHRLLHMQMV…LEKARPGQFS (616 aa)) are cytoplasmic. The Protein kinase domain maps to 525-808 (QGSRSSLGAR…DHTFDLFKNI (284 aa)). The 131-residue stretch at 880 to 1010 (TLYFSDIVGF…DTVNTASRME (131 aa)) folds into the Guanylate cyclase domain. Residues 1065 to 1103 (PIPKPPDLQPGSSNHGISLQEIPPERRRKLEKARPGQFS) form a disordered region.

This sequence belongs to the adenylyl cyclase class-4/guanylyl cyclase family. As to quaternary structure, homodimer; requires homodimerization for guanylyl cyclase activity. Interacts with RD3; promotes the exit of GUCY2D from the endoplasmic reticulum and its trafficking to the photoreceptor outer segments. Interaction with RD3 negatively regulates guanylate cyclase activity. As to expression, retina.

It is found in the photoreceptor outer segment membrane. The protein resides in the endoplasmic reticulum membrane. It carries out the reaction GTP = 3',5'-cyclic GMP + diphosphate. Its activity is regulated as follows. Activated by GUCA1A when free calcium ions concentration is low, and inhibited by GUCA1A when free calcium ions concentration is high. Negatively regulated by RD3; inhibits the basal and GUCA1A-stimulated guanylate cyclase activity. Its function is as follows. Catalyzes the synthesis of cyclic GMP (cGMP) in rods and cones of photoreceptors. Plays an essential role in phototransduction, by mediating cGMP replenishment. May also participate in the trafficking of membrane-asociated proteins to the photoreceptor outer segment membrane. In Homo sapiens (Human), this protein is Retinal guanylyl cyclase 1 (GUCY2D).